A 428-amino-acid polypeptide reads, in one-letter code: MPAIVLVGAQWGDEGKGKATDALGARVDYVVKFNGGNNAGHTVVVGDEKYALHLLPSGILTPGVTPVIGNGVVVDLSVLFEEIDALTARGVDCSKLLLSASAHVIAPYHRVLDQVTERFLGSRKIGTTGRGIGPTYADKINRIGIRVQDLFDESILRQKVEGALDQKNHLLLKVYNRRAVSVDETVENLLSFRDRIAPMVTDVSLELSRALDRDEIVLFEGGQATMLDIDHGTYPYVTSSNATAAGACTGAGIPPNRVDRIVAVVKAYTTRVGEGPFPTELLDADGEKLRQDGGEFGTTTGRPRRTGWYDAVISRYSARINGVTDFVLTKLDTLTGWERIPVCVAYDVDGVRHDEIPMSQSDFHHAKPIYEFFDGWTEDITGARSMEDLPKNAQAYVEALEAISGSRISAVGVGPDREQTVVRHDLLG.

Residues 12–18 (GDEGKGK) and 40–42 (GHT) each bind GTP. Residue D13 is the Proton acceptor of the active site. Residues D13 and G40 each contribute to the Mg(2+) site. Residues 13–16 (DEGK), 38–41 (NAGH), T128, R142, Q223, T238, and R302 contribute to the IMP site. Residue H41 is the Proton donor of the active site. Substrate is bound at residue 298 to 304 (TTTGRPR). GTP contacts are provided by residues R304, 330-332 (KLD), and 412-414 (GVG).

The protein belongs to the adenylosuccinate synthetase family. Homodimer. The cofactor is Mg(2+).

It localises to the cytoplasm. The catalysed reaction is IMP + L-aspartate + GTP = N(6)-(1,2-dicarboxyethyl)-AMP + GDP + phosphate + 2 H(+). Its pathway is purine metabolism; AMP biosynthesis via de novo pathway; AMP from IMP: step 1/2. Plays an important role in the de novo pathway of purine nucleotide biosynthesis. Catalyzes the first committed step in the biosynthesis of AMP from IMP. The polypeptide is Adenylosuccinate synthetase (Kineococcus radiotolerans (strain ATCC BAA-149 / DSM 14245 / SRS30216)).